The sequence spans 47 residues: Defensin-like protein 1 (47 aa).

4 disulfides stabilise this stretch: Cys-5–Cys-47, Cys-16–Cys-36, Cys-22–Cys-43, and Cys-26–Cys-45.

The protein belongs to the DEFL family.

Its function is as follows. Fabatins have antibacterial activity against Gram-positive and Gram-negative bacteria. High activity against P.aeruginosa. No activity against S.cerevisiae and C.albicans. This Vicia faba (Broad bean) protein is Defensin-like protein 1.